The sequence spans 408 residues: LL-diaminopimelate aminotransferase (408 aa).

The substrate site is built by Tyr15 and Gly42. Residues Tyr72, 108–109 (SK), Tyr132, Asn187, Tyr218, and 246–248 (SFS) contribute to the pyridoxal 5'-phosphate site. Residues Lys109, Tyr132, and Asn187 each contribute to the substrate site. The residue at position 249 (Lys249) is an N6-(pyridoxal phosphate)lysine. Pyridoxal 5'-phosphate-binding residues include Arg257 and Asn292. The substrate site is built by Asn292 and Arg388.

The protein belongs to the class-I pyridoxal-phosphate-dependent aminotransferase family. LL-diaminopimelate aminotransferase subfamily. As to quaternary structure, homodimer. It depends on pyridoxal 5'-phosphate as a cofactor.

It catalyses the reaction (2S,6S)-2,6-diaminopimelate + 2-oxoglutarate = (S)-2,3,4,5-tetrahydrodipicolinate + L-glutamate + H2O + H(+). It participates in amino-acid biosynthesis; L-lysine biosynthesis via DAP pathway; LL-2,6-diaminopimelate from (S)-tetrahydrodipicolinate (aminotransferase route): step 1/1. Functionally, involved in the synthesis of meso-diaminopimelate (m-DAP or DL-DAP), required for both lysine and peptidoglycan biosynthesis. Catalyzes the direct conversion of tetrahydrodipicolinate to LL-diaminopimelate. In Synechococcus sp. (strain RCC307), this protein is LL-diaminopimelate aminotransferase.